Reading from the N-terminus, the 155-residue chain is Endoribonuclease YbeY (155 aa).

Zn(2+) contacts are provided by His-113, His-117, and His-123.

The protein belongs to the endoribonuclease YbeY family. Zn(2+) serves as cofactor.

The protein resides in the cytoplasm. Functionally, single strand-specific metallo-endoribonuclease involved in late-stage 70S ribosome quality control and in maturation of the 3' terminus of the 16S rRNA. The polypeptide is Endoribonuclease YbeY (Ureaplasma urealyticum serovar 10 (strain ATCC 33699 / Western)).